The following is a 2569-amino-acid chain: Highly reducing polyketide synthase pks5 (2569 aa).

A disordered region spans residues M1–P25. Residues S27–A452 enclose the Ketosynthase family 3 (KS3) domain. Residues C200, H335, and H375 each act as for beta-ketoacyl synthase activity in the active site. Positions I572 to I892 are malonyl-CoA:ACP transacylase (MAT) domain. The N-terminal hotdog fold stretch occupies residues H960–K1097. Residues H960–D1268 form a dehydratase (DH) domain region. The region spanning H960–N1270 is the PKS/mFAS DH domain. Catalysis depends on H992, which acts as the Proton acceptor; for dehydratase activity. Residues R1117 to N1270 are C-terminal hotdog fold. The Proton donor; for dehydratase activity role is filled by D1179. Residues L1457–L1567 are methyltransferase (CMet) domain. The enoyl reductase (ER) domain stretch occupies residues D1855–L2170. The segment at T2195–D2371 is ketoreductase (KR) domain. The Carrier domain maps to A2485–S2562. S2522 bears the O-(pantetheine 4'-phosphoryl)serine mark.

Functionally, highly reducing polyketide synthase; part of the gene cluster that mediates the biosynthesis of abscisic acid (ABA), a phytohormone that acts antagonistically toward salicylic acid (SA), jasmonic acid (JA) and ethylene (ETH) signaling, to impede plant defense responses. The first step of the pathway catalyzes the reaction from farnesyl diphosphate to alpha-ionylideneethane performed by the alpha-ionylideneethane synthase abl3 via a three-step reaction mechanism involving 2 neutral intermediates, beta-farnesene and allofarnesene. The cytochrome P450 monooxygenase abl1 might then be involved in the conversion of alpha-ionylideneethane to alpha-ionylideneacetic acid. Alpha-ionylideneacetic acid is further converted to abscisic acid in 2 steps involving the cytochrome P450 monooxygenase abl2 and the short-chain dehydrogenase/reductase abl4, via the intermediates 1'-deoxy-ABA or 1',4'-trans-diol-ABA, depending on the order of action of these 2 enzymes. Abl2 is responsible for the hydroxylation of carbon atom C-1' and abl4 might be involved in the oxidation of the C-4' carbon atom. Pks5 is clearly not involved in the production of ABA. Nonetheless, the possibility cannot be excluded that pks5 may modify ABA into another compound. It also cannot be excluded the possibility that pks5 also has a function completely independent of ABA synthesis. Pks5 is not required for pathogenicity on B.napus cotyledon. The chain is Highly reducing polyketide synthase pks5 from Leptosphaeria maculans (strain JN3 / isolate v23.1.3 / race Av1-4-5-6-7-8) (Blackleg fungus).